A 1070-amino-acid chain; its full sequence is TSC22 domain family protein 1 (1070 aa).

The tract at residues 1–98 is required for interaction with TGFBR1 and promotion of TGF-beta signaling; it reads MHQPPESTAA…SQAQLQAQPL (98 aa). Disordered stretches follow at residues 1–110, 125–289, 458–487, 604–637, and 830–858; these read MHQP…KKSG, ISSN…PASV, VTSE…VGSG, YSQA…STQM, and TSQV…AQTP. Over residues 36–45 the composition is skewed to low complexity; that stretch reads GSASALNAAG. Positions 58–70 are enriched in pro residues; that stretch reads FPPPSLLQPPPPA. Over residues 84–100 the composition is skewed to low complexity; sequence SLNLLSQAQLQAQPLAP. Residues 133 to 142 show a composition bias toward acidic residues; the sequence is EDTESYDDLD. Positions 216–240 are enriched in basic residues; the sequence is HPHHLHHHHHIHHGHHLQHGHHHPS. Positions 241 to 250 are enriched in low complexity; the sequence is HVAVASASIP. The span at 261 to 271 shows a compositional bias: polar residues; that stretch reads KLSTTGSSDSI. Position 263 is a phosphoserine (Ser263). Low complexity-rich tracts occupy residues 272–289 and 465–478; these read TPVA…PASV and TSGS…STRS. Residues 611 to 622 show a composition bias toward pro residues; that stretch reads VQTPLPGAPPPQ. The span at 830-845 shows a compositional bias: low complexity; sequence TSQVSSAGPSGMPSAP. The segment covering 849–858 has biased composition (polar residues); sequence VPPQNIAQTP. The interval 1003-1024 is leucine-zipper; sequence LKEQIKELIEKNSQLEQENNLL. The tract at residues 1034-1070 is disordered; it reads AQFQAQLQTGSPPATTQPQGTTQPPAQPASQGSGPTA. The span at 1041–1070 shows a compositional bias: low complexity; that stretch reads QTGSPPATTQPQGTTQPPAQPASQGSGPTA.

The protein belongs to the TSC-22/Dip/Bun family. Forms homodimers. Forms heterodimers. Component of a complex composed of TSC22D1 (via N-terminus), TGFBR1 and TGFBR2; the interaction between TSC22D1 and TGFBR1 is inhibited by SMAD7 and promoted by TGFB1. Interacts with SMAD7; the interaction requires TGF-beta and the interaction is inhibited by TGFBR1. Interacts with TPT1/fortilin; interaction results in the destabilization of TSC22D1 protein and prevents TSC22D1-mediated apoptosis. Interacts with SMAD4 (via N-terminus). Interacts with ACVRL1/ALK1, ACVR1/ALK2, BMPR1A/ALK3, ACVR1B/ALK4, BMPR1B/ALK6, ACVR2A/ACTRII, and BMPR2. Interacts with SMAD6. Interacts with TFE3; the interaction is enhanced in the presence of TGF-beta. As to quaternary structure, forms a heterodimer with TSC22D4/THG1. In terms of assembly, forms a heterodimer with TSC22D4/THG1. Interacts with histone H1-2. Interacts with GNL3.

The protein localises to the cytoplasm. The protein resides in the nucleus. Its subcellular location is the cell membrane. It is found in the mitochondrion. Its function is as follows. Transcriptional repressor. Acts on the C-type natriuretic peptide (CNP) promoter. Acts to promote CASP3-mediated apoptosis. Positively regulates TGF-beta signaling by interacting with SMAD7 which inhibits binding of SMAD7 to TGFBR1, preventing recruitment of SMURF ubiquitin ligases to TGFBR1 and inhibiting SMURF-mediated ubiquitination and degradation of TGFBR1. Contributes to enhancement of TGF-beta signaling by binding to and modulating the transcription activator activity of SMAD4. Promotes TGF-beta-induced transcription of COL1A2; via its interaction with TFE3 at E-boxes in the gene proximal promoter. Plays a role in the repression of hematopoietic precursor cell growth. Promotes IL2 deprivation-induced apoptosis in T-lymphocytes, via repression of TSC22D3/GILZ transcription and activation of the caspase cascade. Functionally, may act to negatively regulate TGFB3 signaling and thereby inhibit cell death in mammary gland cells. In terms of biological role, positively regulates cell death in response to TGFB3 during mammary gland involution. The chain is TSC22 domain family protein 1 from Pongo abelii (Sumatran orangutan).